Here is a 182-residue protein sequence, read N- to C-terminus: Adenine phosphoribosyltransferase (182 aa).

The protein belongs to the purine/pyrimidine phosphoribosyltransferase family. Homodimer.

It is found in the cytoplasm. It catalyses the reaction AMP + diphosphate = 5-phospho-alpha-D-ribose 1-diphosphate + adenine. Its pathway is purine metabolism; AMP biosynthesis via salvage pathway; AMP from adenine: step 1/1. Functionally, catalyzes a salvage reaction resulting in the formation of AMP, that is energically less costly than de novo synthesis. This Pseudomonas paraeruginosa (strain DSM 24068 / PA7) (Pseudomonas aeruginosa (strain PA7)) protein is Adenine phosphoribosyltransferase.